We begin with the raw amino-acid sequence, 345 residues long: Dihydroorotase (345 aa).

The Zn(2+) site is built by His-13 and His-15. Residues 15–17 (HFR) and Asn-41 contribute to the substrate site. Zn(2+)-binding residues include Lys-98, His-135, and His-173. N6-carboxylysine is present on Lys-98. Position 135 (His-135) interacts with substrate. A substrate-binding site is contributed by Leu-218. Position 246 (Asp-246) interacts with Zn(2+). The active site involves Asp-246. The substrate site is built by His-250 and Ala-262.

This sequence belongs to the metallo-dependent hydrolases superfamily. DHOase family. Class II DHOase subfamily. In terms of assembly, homodimer. It depends on Zn(2+) as a cofactor.

It catalyses the reaction (S)-dihydroorotate + H2O = N-carbamoyl-L-aspartate + H(+). Its pathway is pyrimidine metabolism; UMP biosynthesis via de novo pathway; (S)-dihydroorotate from bicarbonate: step 3/3. Catalyzes the reversible cyclization of carbamoyl aspartate to dihydroorotate. This chain is Dihydroorotase, found in Shewanella piezotolerans (strain WP3 / JCM 13877).